We begin with the raw amino-acid sequence, 231 residues long: Killer cell lectin-like receptor subfamily F member 1 (231 aa).

Over 1 to 38 the chain is Cytoplasmic; that stretch reads MQDEERYMTLNVQSKKRSSAQTSQLTFKDYSVTLHWYK. Residue Tyr-7 is modified to Phosphotyrosine. Residues 39–59 traverse the membrane as a helical; Signal-anchor for type II membrane protein segment; the sequence is ILLGISGTVNGILTLTLISLI. At 60 to 231 the chain is on the extracellular side; it reads LLVSQGVLLK…SSVFKWICQY (172 aa). Residues Asn-77, Asn-91, Asn-96, and Asn-176 are each glycosylated (N-linked (GlcNAc...) asparagine). The C-type lectin domain maps to 121 to 230; it reads YQGKCYWFSN…CSSVFKWICQ (110 aa). 2 cysteine pairs are disulfide-bonded: Cys-142-Cys-229 and Cys-208-Cys-221.

As to quaternary structure, homodimer. Interacts with CLEC2B. Phosphorylated on Tyr-7; this phosphorylation is required for NKp80/KLRF1-mediated cytotoxicity. Strongly expressed in peripheral blood leukocytes and spleen, with weaker expression in lymph node and adult liver, and no expression detected in bone marrow, thymus, and fetal liver. Not expressed in brain, heart, placenta, lung, kidney, skeletal muscle, and pancreas. Within peripheral blood leukocyte and immunocyte cell lines, expression was predominant in NK cells but was also detected in monocytes.

It is found in the membrane. In terms of biological role, functions as an activating receptor involved in immunosurveillance upon binding to various ligands displayed at the surface of myeloid cells. Upon interaction with CLEC2B ligand, stimulates NK-cell cytotoxicity and cytokine production leading to the cytolysis of malignant CLEC2B-expressing myeloid cells. Actviation of the common cytotoxicity pathway involves SRC and SYK kinases. This is Killer cell lectin-like receptor subfamily F member 1 (KLRF1) from Homo sapiens (Human).